Consider the following 180-residue polypeptide: uncharacterized protein (180 aa).

Residues 3–33 adopt a coiled-coil conformation; it reads QQQSNNSNDNKEQLDRVIESLNRVNSETKQI.

This is an uncharacterized protein from Acanthamoeba polyphaga (Amoeba).